A 472-amino-acid chain; its full sequence is tRNA-2-methylthio-N(6)-dimethylallyladenosine synthase (472 aa).

Positions 1-24 (MTGTPDVFPPATPGGAPLVALPAG) are disordered. Positions 33–150 (GKLYIKTHGC…LPELIRARRE (118 aa)) constitute an MTTase N-terminal domain. Residues Cys42, Cys79, Cys113, Cys187, Cys191, and Cys194 each contribute to the [4Fe-4S] cluster site. Residues 173-407 (RAEGASAFVS…RINAHAAGIS (235 aa)) form the Radical SAM core domain. The region spanning 408-471 (EKMVGTVQTV…TNSLRARVVA (64 aa)) is the TRAM domain.

The protein belongs to the methylthiotransferase family. MiaB subfamily. Monomer. [4Fe-4S] cluster is required as a cofactor.

Its subcellular location is the cytoplasm. It carries out the reaction N(6)-dimethylallyladenosine(37) in tRNA + (sulfur carrier)-SH + AH2 + 2 S-adenosyl-L-methionine = 2-methylsulfanyl-N(6)-dimethylallyladenosine(37) in tRNA + (sulfur carrier)-H + 5'-deoxyadenosine + L-methionine + A + S-adenosyl-L-homocysteine + 2 H(+). In terms of biological role, catalyzes the methylthiolation of N6-(dimethylallyl)adenosine (i(6)A), leading to the formation of 2-methylthio-N6-(dimethylallyl)adenosine (ms(2)i(6)A) at position 37 in tRNAs that read codons beginning with uridine. The chain is tRNA-2-methylthio-N(6)-dimethylallyladenosine synthase from Stenotrophomonas maltophilia (strain K279a).